The sequence spans 365 residues: tRNA/tmRNA (uracil-C(5))-methyltransferase (365 aa).

Glutamine 189, tyrosine 217, asparagine 222, glutamate 238, and aspartate 298 together coordinate S-adenosyl-L-methionine. Cysteine 323 functions as the Nucleophile in the catalytic mechanism. The Proton acceptor role is filled by glutamate 357.

This sequence belongs to the class I-like SAM-binding methyltransferase superfamily. RNA M5U methyltransferase family. TrmA subfamily.

It catalyses the reaction uridine(54) in tRNA + S-adenosyl-L-methionine = 5-methyluridine(54) in tRNA + S-adenosyl-L-homocysteine + H(+). The catalysed reaction is uridine(341) in tmRNA + S-adenosyl-L-methionine = 5-methyluridine(341) in tmRNA + S-adenosyl-L-homocysteine + H(+). Functionally, dual-specificity methyltransferase that catalyzes the formation of 5-methyluridine at position 54 (m5U54) in all tRNAs, and that of position 341 (m5U341) in tmRNA (transfer-mRNA). The polypeptide is tRNA/tmRNA (uracil-C(5))-methyltransferase (Shewanella denitrificans (strain OS217 / ATCC BAA-1090 / DSM 15013)).